We begin with the raw amino-acid sequence, 383 residues long: Beta-1,3-galactosyltransferase 4 (383 aa).

Over 1-8 (MPLSLFRR) the chain is Cytoplasmic. A helical membrane pass occupies residues 9–29 (LLLAALLLVIIWTLFGPSGIG). Over 30–383 (EELLSLSLAS…RCRVIAWLHS (354 aa)) the chain is Lumenal. Asn149 carries an N-linked (GlcNAc...) asparagine glycan.

The protein belongs to the glycosyltransferase 31 family.

The protein resides in the golgi apparatus membrane. The enzyme catalyses a ganglioside GM2 (d18:1(4E)) + UDP-alpha-D-galactose = a ganglioside GM1 (d18:1(4E)) + UDP + H(+). The catalysed reaction is a ganglioside GM2 + UDP-alpha-D-galactose = a ganglioside GM1 + UDP + H(+). It catalyses the reaction a ganglioside GD2 (d18:1(4E)) + UDP-alpha-D-galactose = a ganglioside GD1b (d18:1(4E)) + UDP + H(+). It carries out the reaction a ganglioside GA2 (d18:1(4E)) + UDP-alpha-D-galactose = a ganglioside GA1 (d18:1(4E)) + UDP + H(+). Its pathway is protein modification; protein glycosylation. In terms of biological role, involved in GM1/GD1B/GA1 ganglioside biosynthesis. The sequence is that of Beta-1,3-galactosyltransferase 4 (B3GALT4) from Canis lupus familiaris (Dog).